The sequence spans 612 residues: MKASYLETLDRIKDEHAEMSKHVNQQRSDIEKVALEKENMNRSYMTYAEVSNTLRSDLRKAEEINKRLQEFIMQSLAPQLSQDNQANCLAALEAFKTASPRENGNGAPALPPGFPPGAAGMLGMMPNMPFGMSPAMSQLFNQFASPHVNGGDGAGGSSGGASEAKKAKLEDPDDGELEIDVTNDDHPSTASNGGAANKNGRDSTNSVASSGASTPSIASNSRARQQQQPLAGLQGLEQMNFLAGFNPNLLRQASAAGGFNFLNDPHAQARLAAAIGQIGSRPAYSFKIVDGGVPTPTSFPPDAQKGPGIPTGLKKKMELNHGEVVCAATISRDNSRVYTGGKGCVKIWDVKESDISGATVVNRPPIASLDCLKENYIRSCKLFEDGNTLLIGGEASTVALWDLTTETKTLDLETDSQACYALAMSPDEKLLFACLADGNILIYDIHNKVKVGTLPGHQDGASCLDLSKDGTKLWSGGLDNSVRCWDLAQRKEVAKHDFASQVFSLGCCPNDEWVAVGMENNYVEVLSTTGKEKYQLTQHESCVLSLKFAHSGKFFISTGKDNALNAWRTPYGASLFQLKENSSVLSCDISFDDSLIVTGSGEKKATLYAVEY.

Positions 143–228 are disordered; the sequence is FASPHVNGGD…SNSRARQQQQ (86 aa). Residues 150–159 are compositionally biased toward gly residues; sequence GGDGAGGSSG. The segment at 153-196 is CCN domain; the sequence is GAGGSSGGASEAKKAKLEDPDDGELEIDVTNDDHPSTASNGGAA. The segment covering 171 to 182 has biased composition (acidic residues); it reads DPDDGELEIDVT. Positions 202-221 are enriched in polar residues; the sequence is DSTNSVASSGASTPSIASNS. WD repeat units follow at residues 308–339, 372–402, 414–444, 456–486, 538–568, and 579–609; these read GIPTGLKKKMELNHGEVVCAATISRDNSRVYT, LKENYIRSCKLFEDGNTLLIGGEASTVALWD, TDSQACYALAMSPDEKLLFACLADGNILIYD, GHQDGASCLDLSKDGTKLWSGGLDNSVRCWD, QHESCVLSLKFAHSGKFFISTGKDNALNAWR, and KENSSVLSCDISFDDSLIVTGSGEKKATLYA.

This sequence belongs to the WD repeat Groucho/TLE family. Interacts with unc-4. Interacts with ref-1. May interact with mls-1.

It localises to the nucleus. Functionally, transcriptional corepressor that functions with the neural specificity gene unc-4 to govern motor neuron identity. In concert with unc-4, represses the expression of VB-specific genes such as ceh-12, thereby preventing the adoption of VB motor neuron fate. May function with transcription factor mls-1 to promote uterine muscle specification and formation. The chain is Transcription factor unc-37 (unc-37) from Caenorhabditis elegans.